An 822-amino-acid chain; its full sequence is General transcription factor 3C polypeptide 4 (822 aa).

Residue Met-1 is modified to N-acetylmethionine. Residues 1 to 41 (MNTADQARVGPADDGPAPSGEEEGEGGGEAGGKEPAADAAP) are disordered. Ser-19 carries the post-translational modification Phosphoserine. Residue Lys-225 forms a Glycyl lysine isopeptide (Lys-Gly) (interchain with G-Cter in SUMO2) linkage. Phosphoserine occurs at positions 604 and 611. The segment at 608–663 (LVDSPGMGNADDEQQEEGTSSKQVVKQGLQERSKEGDVEEPTDDSLPTTGDAGGRE) is disordered. Lys-629 is covalently cross-linked (Glycyl lysine isopeptide (Lys-Gly) (interchain with G-Cter in SUMO2)). The residue at position 652 (Ser-652) is a Phosphoserine.

The protein belongs to the TFIIIC subunit 4 family. In terms of assembly, part of the TFIIIC subcomplex TFIIIC2, consisting of six subunits, GTF3C1, GTF3C2, GTF3C3, GTF3C4, GTF3C5 and GTF3C6. Interacts with BRF1, GTF3C1, GTF3C2, GTF3C5, GTF3C6, POLR3C and POLR3F.

It is found in the nucleus. It carries out the reaction L-lysyl-[protein] + acetyl-CoA = N(6)-acetyl-L-lysyl-[protein] + CoA + H(+). Its function is as follows. Essential for RNA polymerase III to make a number of small nuclear and cytoplasmic RNAs, including 5S RNA, tRNA, and adenovirus-associated (VA) RNA of both cellular and viral origin. Has histone acetyltransferase activity (HAT) with unique specificity for free and nucleosomal H3. May cooperate with GTF3C5 in facilitating the recruitment of TFIIIB and RNA polymerase through direct interactions with BRF1, POLR3C and POLR3F. May be localized close to the A box. The protein is General transcription factor 3C polypeptide 4 (GTF3C4) of Homo sapiens (Human).